The primary structure comprises 38 residues: Photosystem II reaction center protein L (38 aa).

A helical transmembrane segment spans residues 17–37 (SLYWGLLLIXVLAVLFSNYFF).

The protein belongs to the PsbL family. As to quaternary structure, PSII is composed of 1 copy each of membrane proteins PsbA, PsbB, PsbC, PsbD, PsbE, PsbF, PsbH, PsbI, PsbJ, PsbK, PsbL, PsbM, PsbT, PsbX, PsbY, PsbZ, Psb30/Ycf12, at least 3 peripheral proteins of the oxygen-evolving complex and a large number of cofactors. It forms dimeric complexes.

The protein localises to the plastid. It localises to the chloroplast thylakoid membrane. Its function is as follows. One of the components of the core complex of photosystem II (PSII). PSII is a light-driven water:plastoquinone oxidoreductase that uses light energy to abstract electrons from H(2)O, generating O(2) and a proton gradient subsequently used for ATP formation. It consists of a core antenna complex that captures photons, and an electron transfer chain that converts photonic excitation into a charge separation. This subunit is found at the monomer-monomer interface and is required for correct PSII assembly and/or dimerization. The protein is Photosystem II reaction center protein L of Allium textile (Textile onion).